We begin with the raw amino-acid sequence, 370 residues long: Chorismate synthase (370 aa).

An NADP(+)-binding site is contributed by arginine 48. FMN contacts are provided by residues 125–127 (RSS), 241–242 (NA), glycine 285, 300–304 (KPTSS), and arginine 326.

The protein belongs to the chorismate synthase family. As to quaternary structure, homotetramer. It depends on FMNH2 as a cofactor.

The catalysed reaction is 5-O-(1-carboxyvinyl)-3-phosphoshikimate = chorismate + phosphate. It functions in the pathway metabolic intermediate biosynthesis; chorismate biosynthesis; chorismate from D-erythrose 4-phosphate and phosphoenolpyruvate: step 7/7. In terms of biological role, catalyzes the anti-1,4-elimination of the C-3 phosphate and the C-6 proR hydrogen from 5-enolpyruvylshikimate-3-phosphate (EPSP) to yield chorismate, which is the branch point compound that serves as the starting substrate for the three terminal pathways of aromatic amino acid biosynthesis. This reaction introduces a second double bond into the aromatic ring system. This Jannaschia sp. (strain CCS1) protein is Chorismate synthase.